The sequence spans 424 residues: 5,5'-dehydrodivanillate O-demethylase oxygenase subunit (424 aa).

Positions 27-135 (WHPIGGESEF…VRALGGLLWA (109 aa)) constitute a Rieske domain. Positions 68, 70, 87, and 90 each coordinate [2Fe-2S] cluster. The Fe cation site is built by His-181, His-186, and Asp-306.

This sequence belongs to the bacterial ring-hydroxylating dioxygenase alpha subunit family. In terms of assembly, homotrimer. The three-component monooxygenase is composed of an oxygenase (LigXa), a ferredoxin (LigXc) and a ferredoxin reductase (LigXd). Requires [2Fe-2S] cluster as cofactor. The cofactor is Fe cation.

It catalyses the reaction 5,5'-dehydrodivanillate + NADH + O2 + H(+) = 2,2',3-trihydroxy-3'-methoxy-5,5'-dicarboxybiphenyl + formaldehyde + NAD(+) + H2O. Its function is as follows. Involved in the catabolism of 5,5'-dehydrodivanillate (DDVA), an intermediate in the biodegradation of lignin. Part of a three-component monooxygenase that catalyzes the O-demethylation of DDVA, leading to the formation of 2,2',3-trihydroxy-3'-methoxy-5,5'-dicarboxybiphenyl (OH-DDVA). The polypeptide is 5,5'-dehydrodivanillate O-demethylase oxygenase subunit (Sphingobium sp. (strain NBRC 103272 / SYK-6)).